The primary structure comprises 131 residues: Small ribosomal subunit protein uS8 (131 aa).

Belongs to the universal ribosomal protein uS8 family. As to quaternary structure, part of the 30S ribosomal subunit. Contacts proteins S5 and S12.

Functionally, one of the primary rRNA binding proteins, it binds directly to 16S rRNA central domain where it helps coordinate assembly of the platform of the 30S subunit. The chain is Small ribosomal subunit protein uS8 from Ruminiclostridium cellulolyticum (strain ATCC 35319 / DSM 5812 / JCM 6584 / H10) (Clostridium cellulolyticum).